Here is a 264-residue protein sequence, read N- to C-terminus: Small ribosomal subunit protein eS1B (264 aa).

Positions 1–19 (MALGKNKRISKGGKRGKRG) are enriched in basic residues. The segment at 1 to 23 (MALGKNKRISKGGKRGKRGKAQE) is disordered.

It belongs to the eukaryotic ribosomal protein eS1 family. Component of the small ribosomal subunit. Mature ribosomes consist of a small (40S) and a large (60S) subunit. The 40S subunit contains about 33 different proteins and 1 molecule of RNA (18S). The 60S subunit contains about 49 different proteins and 3 molecules of RNA (25S, 5.8S and 5S).

It is found in the cytoplasm. The chain is Small ribosomal subunit protein eS1B from Leishmania infantum.